The chain runs to 94 residues: Co-chaperonin GroES (94 aa).

The protein belongs to the GroES chaperonin family. Heptamer of 7 subunits arranged in a ring. Interacts with the chaperonin GroEL.

Its subcellular location is the cytoplasm. Functionally, together with the chaperonin GroEL, plays an essential role in assisting protein folding. The GroEL-GroES system forms a nano-cage that allows encapsulation of the non-native substrate proteins and provides a physical environment optimized to promote and accelerate protein folding. GroES binds to the apical surface of the GroEL ring, thereby capping the opening of the GroEL channel. In Streptococcus agalactiae serotype III (strain NEM316), this protein is Co-chaperonin GroES.